A 781-amino-acid chain; its full sequence is Zinc finger protein klf1 (781 aa).

2 C2H2-type zinc fingers span residues 17–41 and 47–70; these read YKCD…FRSH and FICP…NQKH.

The protein localises to the nucleus. The protein resides in the cytoplasm. It localises to the cytoskeleton. Its subcellular location is the spindle. In terms of biological role, required for maintaining cell viability in nitrogen-deficient stationary phase (G0) cells. The protein is Zinc finger protein klf1 (klf1) of Schizosaccharomyces pombe (strain 972 / ATCC 24843) (Fission yeast).